The following is a 550-amino-acid chain: MTKQYERKAKGGNLLSAFELYQRNTDNMPGLGEMLVDEWFETCRDYIQDGHVDESGTFRPDNAFYLRRLTLKDFRRFSLLEIKFEEDLTVIIGNNGKGKTSILYAIAKTLSWFVANILKEGGSGQRLSELTDIKNDAENRYADVSSTFFFGKGLKSVPIRLSRSALGTAERRDSEVKPARDLADIWRVINEAKTINLPTFALYNVERSQPFNRNTKDNAGRREERFDAYSQALGGAGRFDHFVEWYIYLHKRTISDISSSIKELEQQVNDLQRSVDGGMVSVKSLLEQMKLKLSEASERNDAAVSSKMVTESVQKSIVEKSICSVVPSISKIWVEMTTGSDLVKVTNDGHDVTIDQLSDGQRVFLSLVADLARRMVMLNPLLENPLEGRGIVLIDEIELHLHPKWQQEVILNLRSVFPNIQFIITTHSPIVLSTIEKRCIREFDPNDDGNQSFLDSPDMQTKGSENAQILEQVMNVHPTPPGIAESHWLGDFELLLLDNSGELDNQSQELYDKIKTHFGIDSAELKKADSLIRINKMKNKINKIRAEKGK.

An ATP-binding motif is present at residues 93–100; sequence GNNGKGKT.

Its function is as follows. Probable ATPase component of antiviral defense system retron Ec78, composed of a non-coding RNA (ncRNA), a reverse transcriptase (RT), this protein and a putative HNH endonuclease. Expression of retron Ec78 confers protection against bacteriophage T5. At multiplicity of infection (MOI) of 0.02 cultures slow growth when infected with T5 but do not collapse, at MOI 2 cultures enter growth stasis. The polypeptide is Retron Ec78 probable ATPase (Escherichia coli).